We begin with the raw amino-acid sequence, 464 residues long: Citrate synthase, mitochondrial (464 aa).

The N-terminal 27 residues, 1-27, are a transit peptide targeting the mitochondrion; it reads MALLTAAARLFGAKNASCLVLAARHAS. Positions 2 to 21 match the SIFI-degron motif; that stretch reads ALLTAAARLFGAKNASCLVL. K76 carries the N6-acetyllysine; alternate modification. Position 76 is an N6-succinyllysine; alternate (K76). An N6-succinyllysine mark is found at K103 and K193. S226 is modified (phosphoserine). H301 is a catalytic residue. N6-acetyllysine; alternate is present on residues K321 and K327. Residues K321 and K327 each carry the N6-succinyllysine; alternate modification. H347 is a catalytic residue. R356 is an oxaloacetate binding site. K375 is subject to N6-acetyllysine; alternate. Residue K375 is modified to N6-succinyllysine; alternate. K382 is modified (N6-acetyllysine). K393 carries the post-translational modification N6-acetyllysine; alternate. At K393 the chain carries N6-succinyllysine; alternate. N6,N6,N6-trimethyllysine is present on K395. D402 is an active-site residue. Oxaloacetate-binding residues include R428 and R448. N6-succinyllysine is present on K450. An N6-acetyllysine; alternate modification is found at K459. The residue at position 459 (K459) is an N6-succinyllysine; alternate.

Belongs to the citrate synthase family. In terms of assembly, homodimer. Methylated. Trimethylation at Lys-395 by CSKMT decreases citrate synthase activity. Post-translationally, in response to mitochondrial stress, the precursor protein is ubiquitinated by the SIFI complex in the cytoplasm before mitochondrial import, leading to its degradation. Within the SIFI complex, UBR4 initiates ubiquitin chain that are further elongated or branched by KCMF1.

The protein localises to the mitochondrion matrix. The catalysed reaction is oxaloacetate + acetyl-CoA + H2O = citrate + CoA + H(+). Its pathway is carbohydrate metabolism; tricarboxylic acid cycle; isocitrate from oxaloacetate: step 1/2. Functionally, key enzyme of the Krebs tricarboxylic acid cycle which catalyzes the synthesis of citrate from acetyl coenzyme A and oxaloacetate. In Sus scrofa (Pig), this protein is Citrate synthase, mitochondrial (CS).